We begin with the raw amino-acid sequence, 416 residues long: Choline/ethanolaminephosphotransferase 1 (416 aa).

The tract at residues Met1–Val20 is disordered. Residue Ser18 is modified to Phosphoserine. Thr40 is subject to Phosphothreonine. Asn86 serves as a coordination point for CDP-choline. Helical transmembrane passes span Thr89–Pro108 and Leu116–Asp133. Position 133 (Asp133) interacts with Mg(2+). N-linked (GlcNAc...) asparagine glycosylation occurs at Asn144. Glu151 contacts CDP-choline. Position 154 (Asp154) interacts with Mg(2+). Residue His155 is the Proton acceptor of the active site. Transmembrane regions (helical) follow at residues Gly156–Gly176, Asp180–Gln199, Ile210–Gly230, Met246–Arg267, Val286–Lys306, His315–Leu334, Thr349–Phe363, and Asp368–Cys388. Asp158 contacts Mg(2+).

This sequence belongs to the CDP-alcohol phosphatidyltransferase class-I family. As to quaternary structure, homodimer. Requires Mg(2+) as cofactor. It depends on Mn(2+) as a cofactor.

The protein localises to the endoplasmic reticulum membrane. It localises to the nucleus membrane. The catalysed reaction is CDP-ethanolamine + a 1,2-diacyl-sn-glycerol = a 1,2-diacyl-sn-glycero-3-phosphoethanolamine + CMP + H(+). The enzyme catalyses CDP-choline + a 1,2-diacyl-sn-glycerol = a 1,2-diacyl-sn-glycero-3-phosphocholine + CMP + H(+). It catalyses the reaction 1-O-alkyl-2-acyl-sn-glycerol + CDP-choline = a 1-O-alkyl-2-acyl-sn-glycero-3-phosphocholine + CMP + H(+). It carries out the reaction a 1-O-(1Z-alkenyl)-2-acyl-sn-glycerol + CDP-choline = a 1-O-(1Z-alkenyl)-2-acyl-sn-glycero-3-phosphocholine + CMP + H(+). The catalysed reaction is 1,2-dioctanoyl-sn-glycerol + CDP-choline = 1,2-dioctanoyl-sn-glycero-3-phosphocholine + CMP + H(+). The enzyme catalyses 1,2-didecanoyl-sn-glycerol + CDP-choline = 1,2-didecanoyl-sn-glycero-3-phosphocholine + CMP + H(+). It catalyses the reaction CDP-choline + 1,2-di-(9Z-octadecenoyl)-sn-glycerol = 1,2-di-(9Z-octadecenoyl)-sn-glycero-3-phosphocholine + CMP + H(+). It carries out the reaction 1-hexadecanoyl-2-(9Z-octadecenoyl)-sn-glycerol + CDP-choline = 1-hexadecanoyl-2-(9Z-octadecenoyl)-sn-glycero-3-phosphocholine + CMP + H(+). The catalysed reaction is CDP-ethanolamine + 1,2-di-(9Z-octadecenoyl)-sn-glycerol = 1,2-di-(9Z-octadecenoyl)-sn-glycero-3-phosphoethanolamine + CMP + H(+). The enzyme catalyses 1-hexadecanoyl-2-(9Z-octadecenoyl)-sn-glycerol + CDP-ethanolamine = 1-hexadecanoyl-2-(9Z-octadecenoyl)-sn-glycero-3-phosphoethanolamine + CMP + H(+). It catalyses the reaction 1-hexadecanoyl-2-(4Z,7Z,10Z,13Z,16Z,19Z-docosahexaenoyl)-sn-glycerol + CDP-choline = 1-hexadecanoyl-2-(4Z,7Z,10Z,13Z,16Z,19Z-docosahexaenoyl)-sn-glycero-3-phosphocholine + CMP + H(+). It carries out the reaction 1,2-di-(9Z-hexadecenoyl)-sn-glycerol + CDP-choline = 1,2-di-(9Z-hexadecenoyl)-sn-glycero-3-phosphocholine + CMP + H(+). The catalysed reaction is 1,2-di-(9Z-hexadecenoyl)-sn-glycerol + CDP-ethanolamine = 1,2-di-(9Z-hexadecenoyl)-sn-glycero-3-phosphoethanolamine + CMP + H(+). The enzyme catalyses 1-O-hexadecyl-2-acetyl-sn-glycerol + CDP-choline = 1-O-hexadecyl-2-acetyl-sn-glycero-3-phosphocholine + CMP + H(+). It catalyses the reaction 1-O-hexadecyl-2-(5Z,8Z,11Z,14Z-eicosatetraenoyl)-sn-glycerol + CDP-choline = 1-O-hexadecyl-2-(5Z,8Z,11Z,14Z)-eicosatetraenoyl-sn-glycero-3-phosphocholine + CMP + H(+). The protein operates within phospholipid metabolism; phosphatidylethanolamine biosynthesis; phosphatidylethanolamine from ethanolamine: step 3/3. It functions in the pathway phospholipid metabolism; phosphatidylcholine biosynthesis; phosphatidylcholine from phosphocholine: step 2/2. Catalyzes both phosphatidylcholine and phosphatidylethanolamine biosynthesis from CDP-choline and CDP-ethanolamine, respectively. Involved in protein-dependent process of phospholipid transport to distribute phosphatidyl choline to the lumenal surface. Has a higher cholinephosphotransferase activity than ethanolaminephosphotransferase activity. This is Choline/ethanolaminephosphotransferase 1 from Mus musculus (Mouse).